A 229-amino-acid chain; its full sequence is Ribonuclease 3 (229 aa).

An RNase III domain is found at 4-133; sequence WEELQESVGF…FIGALYLDNG (130 aa). A Mg(2+)-binding site is contributed by E46. D50 is an active-site residue. Positions 119 and 122 each coordinate Mg(2+). E122 is a catalytic residue. The region spanning 159–228 is the DRBM domain; that stretch reads DYKTQLQEIV…AQFAINQLTH (70 aa).

Belongs to the ribonuclease III family. Homodimer. Mg(2+) serves as cofactor.

The protein localises to the cytoplasm. It catalyses the reaction Endonucleolytic cleavage to 5'-phosphomonoester.. Its function is as follows. Digests double-stranded RNA. Involved in the processing of primary rRNA transcript to yield the immediate precursors to the large and small rRNAs (23S and 16S). Processes some mRNAs, and tRNAs when they are encoded in the rRNA operon. Processes pre-crRNA and tracrRNA of type II CRISPR loci if present in the organism. This chain is Ribonuclease 3, found in Listeria welshimeri serovar 6b (strain ATCC 35897 / DSM 20650 / CCUG 15529 / CIP 8149 / NCTC 11857 / SLCC 5334 / V8).